A 425-amino-acid chain; its full sequence is UDP-N-acetylglucosamine 1-carboxyvinyltransferase (425 aa).

25–26 is a phosphoenolpyruvate binding site; that stretch reads KN. UDP-N-acetyl-alpha-D-glucosamine is bound at residue Arg-95. The Proton donor role is filled by Cys-119. 2-(S-cysteinyl)pyruvic acid O-phosphothioketal is present on Cys-119. Residues 124 to 128, Asp-306, and Ile-328 contribute to the UDP-N-acetyl-alpha-D-glucosamine site; that span reads RPVDQ.

The protein belongs to the EPSP synthase family. MurA subfamily.

It is found in the cytoplasm. It carries out the reaction phosphoenolpyruvate + UDP-N-acetyl-alpha-D-glucosamine = UDP-N-acetyl-3-O-(1-carboxyvinyl)-alpha-D-glucosamine + phosphate. It participates in cell wall biogenesis; peptidoglycan biosynthesis. Cell wall formation. Adds enolpyruvyl to UDP-N-acetylglucosamine. The protein is UDP-N-acetylglucosamine 1-carboxyvinyltransferase of Thermus thermophilus (strain ATCC 27634 / DSM 579 / HB8).